Reading from the N-terminus, the 119-residue chain is UPF0102 protein CGSHiGG_01960 (119 aa).

This sequence belongs to the UPF0102 family.

The polypeptide is UPF0102 protein CGSHiGG_01960 (Haemophilus influenzae (strain PittGG)).